Reading from the N-terminus, the 216-residue chain is Octanoyltransferase (216 aa).

One can recognise a BPL/LPL catalytic domain in the interval 24–212; it reads KFRKECILFL…NLCSFLEPIN (189 aa). Substrate is bound by residues 69–76, 140–142, and 153–155; these read RGGDFTAH, SIG, and GIA. C171 acts as the Acyl-thioester intermediate in catalysis.

This sequence belongs to the LipB family.

It localises to the cytoplasm. It carries out the reaction octanoyl-[ACP] + L-lysyl-[protein] = N(6)-octanoyl-L-lysyl-[protein] + holo-[ACP] + H(+). Its pathway is protein modification; protein lipoylation via endogenous pathway; protein N(6)-(lipoyl)lysine from octanoyl-[acyl-carrier-protein]: step 1/2. Catalyzes the transfer of endogenously produced octanoic acid from octanoyl-acyl-carrier-protein onto the lipoyl domains of lipoate-dependent enzymes. Lipoyl-ACP can also act as a substrate although octanoyl-ACP is likely to be the physiological substrate. This Leptospira interrogans serogroup Icterohaemorrhagiae serovar Lai (strain 56601) protein is Octanoyltransferase.